Here is an 880-residue protein sequence, read N- to C-terminus: GATOR2 complex protein MIOS-A (880 aa).

6 WD repeats span residues 60-102, 113-157, 185-224, 226-264, 268-309, and 399-441; these read SDTP…NSKC, KHAR…TPEV, GQNDACLSLCWLPRDQKLLLAGMHRNLAIFDLRNTNQKMF, NTKAVQGVTVDPHFHDRVASFFEGQVAIWDLRKFEKPVL, EQPK…TPIG, and RLRA…KQYA. The segment at 740-786 adopts a C4-type zinc-finger fold; sequence VSCNFCGKSISYSCSSVPHQGRGFSQYGVSGSPTKSKFTSCPGCRKP. Zn(2+) is bound by residues Cys-742, Cys-745, Cys-780, Cys-783, Cys-793, Cys-832, Cys-835, His-837, His-840, His-843, Cys-854, Cys-859, and Cys-863. An RING-type; atypical zinc finger spans residues 787–868; sequence LPRCALCLIN…CSCKCMQLDT (82 aa).

This sequence belongs to the WD repeat mio family. In terms of assembly, component of the GATOR2 subcomplex, composed of MIOS, SEC13, SEH1L, WDR24 and WDR59. The GATOR2 complex interacts with CASTOR1 and CASTOR2; the interaction is negatively regulated by arginine. The GATOR2 complex interacts with SESN1, SESN2 and SESN3; the interaction is negatively regulated by amino acids. Interacts with SAR1; the interaction is direct, disrupted by leucine and mediates the interaction of SAR1 with the GATOR2 complex to negatively regulate the TORC1 signaling upon leucine deprivation.

The protein localises to the lysosome membrane. Its activity is regulated as follows. The GATOR2 complex is negatively regulated by the upstream amino acid sensors CASTOR1 and SESN2, which sequester the GATOR2 complex in absence of amino acids. In the presence of abundant amino acids, GATOR2 is released from CASTOR1 and SESN2 and activated. As a component of the GATOR2 complex, functions as an activator of the amino acid-sensing branch of the mTORC1 signaling pathway. The GATOR2 complex indirectly activates mTORC1 through the inhibition of the GATOR1 subcomplex. GATOR2 probably acts as an E3 ubiquitin-protein ligase toward GATOR1. In the presence of abundant amino acids, the GATOR2 complex mediates ubiquitination of the NPRL2 core component of the GATOR1 complex, leading to GATOR1 inactivation. In the absence of amino acids, GATOR2 is inhibited, activating the GATOR1 complex. Within the GATOR2 complex, MIOS is required to prevent autoubiquitination of WDR24, the catalytic subunit of the complex. The protein is GATOR2 complex protein MIOS-A of Xenopus laevis (African clawed frog).